Reading from the N-terminus, the 155-residue chain is 6,7-dimethyl-8-ribityllumazine synthase (155 aa).

Residues Phe-22, 56–58 (AFE), and 80–82 (AVI) each bind 5-amino-6-(D-ribitylamino)uracil. A (2S)-2-hydroxy-3-oxobutyl phosphate-binding site is contributed by 85-86 (AT). The active-site Proton donor is the His-88. Phe-113 is a binding site for 5-amino-6-(D-ribitylamino)uracil. Residue Arg-127 participates in (2S)-2-hydroxy-3-oxobutyl phosphate binding.

This sequence belongs to the DMRL synthase family.

It carries out the reaction (2S)-2-hydroxy-3-oxobutyl phosphate + 5-amino-6-(D-ribitylamino)uracil = 6,7-dimethyl-8-(1-D-ribityl)lumazine + phosphate + 2 H2O + H(+). The protein operates within cofactor biosynthesis; riboflavin biosynthesis; riboflavin from 2-hydroxy-3-oxobutyl phosphate and 5-amino-6-(D-ribitylamino)uracil: step 1/2. Functionally, catalyzes the formation of 6,7-dimethyl-8-ribityllumazine by condensation of 5-amino-6-(D-ribitylamino)uracil with 3,4-dihydroxy-2-butanone 4-phosphate. This is the penultimate step in the biosynthesis of riboflavin. This chain is 6,7-dimethyl-8-ribityllumazine synthase, found in Clostridium acetobutylicum (strain ATCC 824 / DSM 792 / JCM 1419 / IAM 19013 / LMG 5710 / NBRC 13948 / NRRL B-527 / VKM B-1787 / 2291 / W).